The primary structure comprises 62 residues: Mastoparan-AF (62 aa).

An N-terminal signal peptide occupies residues 1-25 (MKNTILILFTAFIALLGFFGMSAEA). AXPX repeat units follow at residues 25-28 (ADPI), 29-32 (ADPI), 33-36 (ADPI), and 43-46 (ADPE). Positions 26-47 (DPIADPIADPISGPNAEADPEA) are excised as a propeptide. Phenylalanine 61 bears the Phenylalanine amide mark.

It belongs to the MCD family. Mastoparan subfamily. As to expression, expressed by the venom gland.

The protein localises to the secreted. It is found in the target cell membrane. In terms of biological role, antimicrobial and mast cell degranulating peptide. Has broad spectrum antibacterial activity against both Gram-positive and Gram-negative bacteria (S.aureus MIC=16-32 ug/ml, S.xylosus MIC=1.5 ug/ml, S.alactolyticus MIC=8 ug/ml, C.koseri MIC=4 ug/ml, E.coli MIC=4-32 ug/ml, K.pneumoniae MIC=32 ug/ml, P.aerugiosa MIC=96 ug/ml, S.choleraesuis MIC=16 ug/ml, S.typhimurium MIC=32 ug/ml, V.parahamelytics MIC=16 ug/ml). Is also active on multi-antibiotic resistant hemolytic E.coli O157:H7. Acts by affecting membrane permeability. On E.coli O157:H7, acts through multiple membrane disruption patterns, including large perforations (full opening) at apical ends (hollow tubes), vesicle budding, forming dents, and membrane corrugation and invagination leading to irregular pits or pores. Exerts 40% lower membrane permeabilization activities on E.coli O157:H7 than on the non-pathogen E.coli BL21. Shows little hemolytic activities on sheep, chicken and human erythrocytes, but with a higher activity on chicken erythrocytes. Its mast cell degranulation activity may be related to the activation of G-protein coupled receptors in mast cells as well as interaction with other proteins located in cell endosomal membranes in the mast cells. This chain is Mastoparan-AF, found in Vespa affinis (Lesser banded hornet).